The primary structure comprises 722 residues: Bifunctional UDP-N-acetylglucosamine 2-epimerase/N-acetylmannosamine kinase (722 aa).

UDP contacts are provided by R19, S23, R113, H220, and N253. CMP-N-acetyl-beta-neuraminate contacts are provided by K259, E271, K280, and H281. Residues V282, S301, S302, E307, and R321 each coordinate UDP. Residues 406 to 722 (TLSALAVDLG…VLDYTTRRIH (317 aa)) form an N-acetylmannosamine kinase region. Position 413 (D413) interacts with Mg(2+). G416 is a binding site for an N-acyl-D-mannosamine 6-phosphate. T417, N418, and R420 together coordinate ADP. G476, R477, T489, N516, D517, and G545 together coordinate an N-acyl-D-mannosamine 6-phosphate. 5 residues coordinate an N-acyl-D-mannosamine: G476, R477, T489, N516, and D517. Residue D517 is part of the active site. An N-acyl-D-mannosamine is bound by residues E566 and H569. H569 contributes to the an N-acyl-D-mannosamine 6-phosphate binding site. Zn(2+)-binding residues include H569, C579, C581, and C586. E588 contacts an N-acyl-D-mannosamine 6-phosphate. An an N-acyl-D-mannosamine-binding site is contributed by E588.

This sequence in the N-terminal section; belongs to the UDP-N-acetylglucosamine 2-epimerase family. It in the C-terminal section; belongs to the ROK (NagC/XylR) family. As to quaternary structure, homodimer. Homotetramer. Homohexamer. The hexameric form exhibits both enzyme activities, whereas the dimeric form only catalyzes the phosphorylation of N-acyl-D-mannosamine. Post-translationally, phosphorylated. Phosphorylation by PKC activates the UDP-N-acetylglucosamine 2-epimerase activity. In terms of tissue distribution, widely expressed. Highest expression is observed in liver.

It localises to the cytoplasm. The protein localises to the cytosol. It carries out the reaction UDP-N-acetyl-alpha-D-glucosamine + H2O = aldehydo-N-acetyl-D-mannosamine + UDP + H(+). The catalysed reaction is an N-acyl-D-mannosamine + ATP = an N-acyl-D-mannosamine 6-phosphate + ADP + H(+). It participates in amino-sugar metabolism; N-acetylneuraminate biosynthesis. With respect to regulation, the UDP-N-acetylglucosamine 2-epimerase activity, in contrast to the N-acetylmannosamine kinase activity, exhibits allosteric regulation by cytidine monophosphate-N-acetylneuraminic acid (CMP-Neu5Ac), the end product of neuraminic acid biosynthesis. Moreover, the activity is contingent upon the oligomeric state of the enzyme. The monomeric form is inactive, while the dimeric form selectively catalyzes the phosphorylation of N-acetylmannosamine. The hexameric form, on the other hand, demonstrates full proficiency in both enzyme activities. Furthermore, the UDP-N-acetylglucosamine 2-epimerase activity is increased by PKC-mediated phosphorylation. Bifunctional enzyme that possesses both UDP-N-acetylglucosamine 2-epimerase and N-acetylmannosamine kinase activities, and serves as the initiator of the biosynthetic pathway leading to the production of N-acetylneuraminic acid (NeuAc), a critical precursor in the synthesis of sialic acids. By catalyzing this pivotal and rate-limiting step in sialic acid biosynthesis, this enzyme assumes a pivotal role in governing the regulation of cell surface sialylation. Sialic acids represent a category of negatively charged sugars that reside on the surface of cells as terminal components of glycoconjugates and mediate important functions in various cellular processes, including cell adhesion, signal transduction, and cellular recognition. The polypeptide is Bifunctional UDP-N-acetylglucosamine 2-epimerase/N-acetylmannosamine kinase (Rattus norvegicus (Rat)).